Here is a 350-residue protein sequence, read N- to C-terminus: Calcium uniporter protein, mitochondrial (350 aa).

Residues 1–49 (MAAAAGRSLLLLLCSRGGGGGAGGCGALTAGCFPGLGVSRHRPHQQHRT) constitute a mitochondrion transit peptide. Over 50 to 232 (AHQRPASWQS…ISRKAEKRTT (183 aa)) the chain is Mitochondrial matrix. Phosphoserine; by CaMK2 is present on residues Ser56 and Ser91. The interval 74-164 (VTVVYQNGLP…LTYHVRPPKR (91 aa)) is N-terminal MCU domain. At Cys96 the chain carries S-glutathionyl cysteine. A coiled-coil region spans residues 191–220 (IEQHQLNKERELVERLEDLKQQLAPLEKVR). A helical transmembrane segment spans residues 233–256 (LVLWGGLAYMATQFGILARLTWWE). Residues 257–264 (YSWDIMEP) are Mitochondrial intermembrane-facing. The short motif at 259–267 (WDIMEPVTY) is the Selectivity filter element. Glu263 provides a ligand contact to Ca(2+). The chain crosses the membrane as a helical span at residues 265 to 282 (VTYFITYGSAMAMYAYFV). The Mitochondrial matrix segment spans residues 283–350 (MTRQEYVYPE…LPLRQIGEKE (68 aa)). The juxtamembrane helix stretch occupies residues 284 to 289 (TRQEYV). Residues 310-338 (RFDLEKYNQLKDAIAQAEMDLKRLRDPLQ) adopt a coiled-coil conformation. Lys331 bears the N6-acetyllysine mark.

Belongs to the MCU (TC 1.A.77) family. As to quaternary structure, homotetramer. Component of the uniplex complex, composed of MCU, EMRE/SMDT1, MICU1 and MICU2 (or MICU3) in a 4:4:1:1 stoichiometry. Interacts with CCDC109B/MCUB; this inhibits channel activity. Interacts with MCUR1. Interactions with MICU1 and MCUR1 are mutually exclusive. Interacts with SLC25A23. Phosphorylation by CaMK2 in heart leads to increased MCU current. The regulation of MCU by CaMK2 is however subject to discussion: another group was unable to reproduce these results. Phosphorylated on tyrosines by PTK2B/PYK2, promoting oligomerization. In terms of processing, glutathionylation at Cys-96 in response to reactive oxygen species (ROS) promotes MCU higher-order assembly, leading to constitutive activation of the MCU channel and mitochondrial calcium overload. Post-translationally, undergoes proteolytic degradation by SPG7. As to expression, detected in heart muscle (at protein level). Expressed in skeletal muscle, heart, kidney, liver, brain, lung, white fat and spleen.

It is found in the mitochondrion inner membrane. It carries out the reaction Ca(2+)(in) = Ca(2+)(out). Its activity is regulated as follows. MCU channel activity is regulated by the heterodimer composed of MICU1 and either MICU2 or MICU3, which act as calcium-sensors. At low calcium levels, MICU1 occludes the pore of the MCU channel, preventing mitochondrial calcium uptake. At higher calcium levels, calcium-binding to MICU1 and MICU2 (or MICU3) induces a conformational change that weakens MCU-MICU1 interactions and moves the MICU1-MICU2 heterodimer away from the pore, allowing calcium permeation through the channel. MCU channel activity is gated by EMRE/SMDT1 via the juxtamembrane helix loop. Inhibited by ruthenium red or its derivative Ru360. Channel-forming and calcium-conducting subunit of the mitochondrial inner membrane calcium uniporter complex (uniplex), which mediates calcium uptake into the mitochondrial matrix. MCU channel activity is regulated by the calcium-sensor subunits of the uniplex MICU1 and MICU2 (or MICU3). Mitochondrial calcium homeostasis plays key roles in cellular physiology and regulates ATP production, cytoplasmic calcium signals and activation of cell death pathways. Involved in buffering the amplitude of systolic calcium rises in cardiomyocytes. While dispensable for baseline homeostatic cardiac function, acts as a key regulator of short-term mitochondrial calcium loading underlying a 'fight-or-flight' response during acute stress: acts by mediating a rapid increase of mitochondrial calcium in pacemaker cells. Participates in mitochondrial permeability transition during ischemia-reperfusion injury. Mitochondrial calcium uptake in skeletal muscle cells is involved in muscle size in adults. Regulates synaptic vesicle endocytosis kinetics in central nerve terminal. Regulates glucose-dependent insulin secretion in pancreatic beta-cells by regulating mitochondrial calcium uptake. Involved in antigen processing and presentation. The protein is Calcium uniporter protein, mitochondrial of Mus musculus (Mouse).